Consider the following 590-residue polypeptide: Putative laccase-19 (590 aa).

A signal peptide spans 1 to 28 (MEKLSMVTSLLCAITVAVLAVAVVSGEA). Plastocyanin-like domains are found at residues 36 to 152 (VVHE…PRDG) and 161 to 315 (KDVP…YAGA). Asparagine 41 and asparagine 47 each carry an N-linked (GlcNAc...) asparagine glycan. Positions 86 and 88 each coordinate Cu cation. N-linked (GlcNAc...) asparagine glycosylation is present at asparagine 120. 2 residues coordinate Cu cation: histidine 131 and histidine 133. Asparagine 205, asparagine 344, asparagine 378, asparagine 397, asparagine 434, and asparagine 465 each carry an N-linked (GlcNAc...) asparagine glycan. Residues 424–566 (DFPIRPPRPF…ATAFIVEDGP (143 aa)) enclose the Plastocyanin-like 3 domain. Positions 483, 486, 488, 545, 546, 547, 551, and 556 each coordinate Cu cation. Residues 565–590 (GPTPETSLPPPPPEFKRCGNNGLSQP) are disordered.

The protein belongs to the multicopper oxidase family. It depends on Cu cation as a cofactor.

Its subcellular location is the secreted. The protein localises to the extracellular space. It is found in the apoplast. The enzyme catalyses 4 hydroquinone + O2 = 4 benzosemiquinone + 2 H2O. Functionally, lignin degradation and detoxification of lignin-derived products. In Oryza sativa subsp. indica (Rice), this protein is Putative laccase-19 (LAC19).